A 273-amino-acid chain; its full sequence is SUMO-1 cysteine protease S273R (273 aa).

Active-site residues include histidine 168 and asparagine 187. Residue glutamine 226 participates in substrate binding. Residue cysteine 232 is the Nucleophile of the active site.

It belongs to the peptidase C63 family.

It localises to the host cytoplasm. Its subcellular location is the virion. In terms of biological role, cysteine protease that plays several role during infection including processing of the structural polyprotein or inhibition of the host immune response. Catalyzes the maturation of the pp220 and pp62 polyprotein precursors into core-shell proteins. Plays a role in the disruption of host pyroptosis via specific cleavage of gasdermin D/GSDMD. In addition, strongly decreases the host cGAS-STING signaling by targeting IKBKE via its enzymatic activity. Also impairs host FOXJ1-mediated antiviral effect via degradation of FOXJ1. This Ornithodoros (relapsing fever ticks) protein is SUMO-1 cysteine protease S273R.